The following is a 480-amino-acid chain: MFS-type transporter oryF (480 aa).

Basic and acidic residues predominate over residues 1-10 (MAEEVNERTR). Positions 1–24 (MAEEVNERTRLLSQSDDPSPSLEE) are disordered. Residues 11–22 (LLSQSDDPSPSL) are compositionally biased toward low complexity. The next 12 membrane-spanning stretches (helical) occupy residues 41–61 (LCIA…AIIV), 81–101 (AFVS…GPLS), 107–127 (ISLL…CAFA), 138–158 (FITG…IGDL), 170–190 (LYTL…AYIV), 197–217 (AIFA…LCTL), 264–284 (FLGT…LFGL), 308–328 (ALNY…TGSL), 351–371 (ILML…GWSA), 378–398 (IMPN…YQCI), 415–435 (GALT…APLI), and 443–463 (WGSS…PILL).

It belongs to the major facilitator superfamily.

Its subcellular location is the membrane. Functionally, MFS-type transporter; part of the gene cluster that mediates the biosynthesis of oryzines, natural products with an unusual maleidride backbone. The polypeptide is MFS-type transporter oryF (Aspergillus oryzae (strain ATCC 42149 / RIB 40) (Yellow koji mold)).